The sequence spans 65 residues: Large ribosomal subunit protein bL35 (65 aa).

The segment at 1–26 is disordered; sequence MPKMKTNRASAKRFKKTASGGFKAGQ.

It belongs to the bacterial ribosomal protein bL35 family.

The chain is Large ribosomal subunit protein bL35 from Oenococcus oeni (strain ATCC BAA-331 / PSU-1).